The chain runs to 402 residues: Ketol-acid reductoisomerase, mitochondrial (402 aa).

A mitochondrion-targeting transit peptide spans 1 to 26 (MAARNCTKALRPLARQLATPAVQRRT). In terms of domain architecture, KARI N-terminal Rossmann spans 63–252 (KEEVHERADW…AVGSGYLYET (190 aa)). NADP(+) is bound by residues 90–99 (GYGSQGHGQG), 114–119 (RKNGKS), and 152–156 (SDAAQ). Residue H177 is part of the active site. Residues 253–400 (TFEKEVYSDL…KAVRSLRPEN (148 aa)) enclose the KARI C-terminal knotted domain. 4 residues coordinate Mg(2+): D261, E265, E297, and E301. S323 is a binding site for substrate.

This sequence belongs to the ketol-acid reductoisomerase family. The cofactor is Mg(2+).

It localises to the mitochondrion. The catalysed reaction is (2R)-2,3-dihydroxy-3-methylbutanoate + NADP(+) = (2S)-2-acetolactate + NADPH + H(+). It carries out the reaction (2R,3R)-2,3-dihydroxy-3-methylpentanoate + NADP(+) = (S)-2-ethyl-2-hydroxy-3-oxobutanoate + NADPH + H(+). The protein operates within amino-acid biosynthesis; L-isoleucine biosynthesis; L-isoleucine from 2-oxobutanoate: step 2/4. Its pathway is amino-acid biosynthesis; L-valine biosynthesis; L-valine from pyruvate: step 2/4. The chain is Ketol-acid reductoisomerase, mitochondrial (ilv-2) from Neurospora crassa (strain ATCC 24698 / 74-OR23-1A / CBS 708.71 / DSM 1257 / FGSC 987).